Reading from the N-terminus, the 320-residue chain is Homeobox-leucine zipper protein HOX25 (320 aa).

The homeobox DNA-binding region spans 79-139 (AAARKRRLTA…NRRARWKTKQ (61 aa)). The leucine-zipper stretch occupies residues 138–182 (KQLELDFDRLRAAHDELLAGRTALAADNESLRSQVILLTEKLQAN). Disordered stretches follow at residues 181 to 209 (ANGK…KSFQ) and 249 to 282 (DSPE…PSSS). Positions 265–278 (SEDDCGGAGSDDDY) are enriched in acidic residues.

It belongs to the HD-ZIP homeobox family. Class I subfamily. Expressed in roots, leaf sheaths and blades and panicles.

Its subcellular location is the nucleus. Functionally, probable transcription factor. In Oryza sativa subsp. japonica (Rice), this protein is Homeobox-leucine zipper protein HOX25 (HOX25).